Reading from the N-terminus, the 335-residue chain is Endo-beta-N-acetylglucosaminidase F2 (335 aa).

A signal peptide spans 1 to 45 (MKTANFSFALCLSVVIMLFIKCTRSEQDLSVTKDAIAQKSGVTVS). A GH18 domain is found at 61 to 321 (QISAGYYRTW…SSNDNTLRAP (261 aa)). Residues serine 73, serine 89, and serine 143 are each glycosylated (O-linked (Man...) serine). Catalysis depends on glutamate 171, which acts as the Proton donor.

Belongs to the glycosyl hydrolase 18 family. Monomer. Carbohydrates at Ser-73, Ser-89 and Ser-143 consist of (2-OMe)Man1-4GlcNAcU1-4GlcU1-4Glc1-4(2-OMe)GlcU1-4[(2-OMe)Rham1-2]Man.

The protein resides in the secreted. It carries out the reaction an N(4)-(oligosaccharide-(1-&gt;3)-[oligosaccharide-(1-&gt;6)]-beta-D-Man-(1-&gt;4)-beta-D-GlcNAc-(1-&gt;4)-alpha-D-GlcNAc)-L-asparaginyl-[protein] + H2O = an oligosaccharide-(1-&gt;3)-[oligosaccharide-(1-&gt;6)]-beta-D-Man-(1-&gt;4)-D-GlcNAc + N(4)-(N-acetyl-beta-D-glucosaminyl)-L-asparaginyl-[protein]. In terms of biological role, endohydrolysis of the di-N-acetylchitobiosyl unit in high-mannose glycopeptides and glycoproteins. Complex biantennary glycans are the preferred substrates. Tri- and tetraantennary glycans are not hydrolyzed, and high mannose glycans are very poor substrates. The sequence is that of Endo-beta-N-acetylglucosaminidase F2 (endOF2) from Elizabethkingia meningoseptica (Chryseobacterium meningosepticum).